Consider the following 119-residue polypeptide: Short coiled-coil protein A (119 aa).

Residues 1-10 (MEGDVDEDDG) are compositionally biased toward acidic residues. The disordered stretch occupies residues 1–26 (MEGDVDEDDGTFTNISLADDSADGEP). Residues 48 to 95 (MENQVEQEEKTRLINQVLELQHTLEDLSARVDAVKEENLKLKSENQVL) are a coiled coil.

It belongs to the SCOC family.

It localises to the golgi apparatus membrane. The protein resides in the golgi apparatus. It is found in the trans-Golgi network. The protein localises to the cytoplasm. Its subcellular location is the cytosol. In terms of biological role, positive regulator of amino acid starvation-induced autophagy. The chain is Short coiled-coil protein A (scoca) from Danio rerio (Zebrafish).